We begin with the raw amino-acid sequence, 516 residues long: MPGSPPPENAPAVLWTCFGASGWRMLLMKQRRNEMKVLDLDCFDRKLPLICDLDGTLIKSDSLHENLFDAFFHSPQQLLRTIPNWFKGRPALKEALAKVRSVEPQALPYREQMLDLIRRARSAGRETYLVTAADQSIADDIISHLGGFDGAKGSSGSLNLKSRRKLQWLQESFPEGFIYAGDSAADLPIWEAASGAVLVGDGVKFESKLREAGVEVRTLSPEKSHPVKDWLSELRIHQWSKNVLIFVPLFLGRIADDFHAVLKTTFGFLAFGLIVSATYIINDLADLEADRAHATKRFRAIAAGRISVMNGFLACLVMLATGIGTALLLDHQFALVASVYLALTLAYSFRLKRVALLDVTVIGALFTLRIVMGQVLNGLAFSPWLFSFSVMFFISLALAKRHVEAMRACSNRKDTIEGRGYLPGDWPLTLGHGLASASASIVIMLLFLALEPRVTHLYHNPAWLYVAPLGVSIWLQRIWLLSHRMELHDDPIVFALNDKTSWFIGALIASAFVMAM.

9 helical membrane passes run 183-203, 261-281, 308-328, 329-349, 356-376, 379-399, 430-450, 461-481, and 492-512; these read SAAD…GDGV, VLKT…TYII, VMNG…TALL, LDHQ…AYSF, LLDV…GQVL, LAFS…LALA, LGHG…FLAL, PAWL…IWLL, and IVFA…ASAF.

It is found in the cell membrane. Its function is as follows. Possible permease/transporter. This is an uncharacterized protein from Sinorhizobium fredii (strain NBRC 101917 / NGR234).